A 314-amino-acid chain; its full sequence is Ribosomal RNA small subunit methyltransferase H (314 aa).

S-adenosyl-L-methionine contacts are provided by residues 35-37 (GGH), D54, F83, D104, and Q111.

The protein belongs to the methyltransferase superfamily. RsmH family.

The protein resides in the cytoplasm. The enzyme catalyses cytidine(1402) in 16S rRNA + S-adenosyl-L-methionine = N(4)-methylcytidine(1402) in 16S rRNA + S-adenosyl-L-homocysteine + H(+). Specifically methylates the N4 position of cytidine in position 1402 (C1402) of 16S rRNA. This Oenococcus oeni (strain ATCC BAA-331 / PSU-1) protein is Ribosomal RNA small subunit methyltransferase H.